Consider the following 291-residue polypeptide: GTP-binding protein RHO4 (291 aa).

The span at 14-31 (GNESNIVSQGSPSSSNLP) shows a compositional bias: polar residues. Residues 14–45 (GNESNIVSQGSPSSSNLPESPGTLDEKNLPRL) form a disordered region. A GTP-binding site is contributed by 79 to 86 (GDGAVGKT). The Effector region signature appears at 101–109 (YIPTIFENY). GTP-binding positions include 127-131 (DTAGQ) and 185-188 (LKSD). The tract at residues 250–273 (THTIKNPFKRNTTRSDIDSSTGDT) is disordered. Phosphoserine occurs at positions 264, 268, and 276. Residue Cys-288 is modified to Cysteine methyl ester. Residue Cys-288 is the site of S-farnesyl cysteine attachment. The propeptide at 289-291 (IIM) is removed in mature form.

The protein belongs to the small GTPase superfamily. Rho family. Interacts with BEM4.

It is found in the cell membrane. The enzyme catalyses GTP + H2O = GDP + phosphate + H(+). In terms of biological role, plays an important role in cell growth. Required to keep the uninucleated state. May be involved in the organization of the cytoskeleton which affects microtubule functions. Most likely RHO3 and RHO4 of S.cerevisiae regulate partially overlapping but different pathways. The sequence is that of GTP-binding protein RHO4 (RHO4) from Saccharomyces cerevisiae (strain ATCC 204508 / S288c) (Baker's yeast).